A 458-amino-acid polypeptide reads, in one-letter code: Ammonium transporter Rh type B (458 aa).

The Cytoplasmic segment spans residues 1–13 (MAGSPSRAAGRRL). Residues 14–34 (QLPLLCLFLQGATAVLFAVFV) traverse the membrane as a helical segment. The Extracellular segment spans residues 35–61 (RYNHKTDAALWHRSNHSNADNEFYFRY). N-linked (GlcNAc...) asparagine glycosylation is present at asparagine 49. A helical membrane pass occupies residues 62 to 82 (PSFQDVHAMVFVGFGFLMVFL). At 83 to 86 (QRYG) the chain is on the cytoplasmic side. The helical transmembrane segment at 87 to 107 (FSSVGFTFLLAAFALQWSTLV) threads the bilayer. The Extracellular segment spans residues 108–124 (QGFLHSFHGGHIHVGVE). A helical membrane pass occupies residues 125 to 145 (SMINADFCAGAVLISFGAVLG). The Cytoplasmic segment spans residues 146–149 (KTGP). The chain crosses the membrane as a helical span at residues 150 to 170 (AQLLLMALLEVVLFGINEFVL). Residues 171-178 (LHLLGVRD) lie on the Extracellular side of the membrane. Residues 179–201 (AGGSMTIHTFGAYFGLVLSRVLY) traverse the membrane as a helical segment. The Cytoplasmic portion of the chain corresponds to 202 to 219 (RPQLEKSKHRQGSVYHSD). Residues 220 to 240 (LFTMIGTIFLWIFWPSFNAAL) form a helical membrane-spanning segment. Residues 241 to 251 (TALGAGQHRTA) lie on the Extracellular side of the membrane. Residues 252-272 (LNTYYSLAASTLGTFALSALV) traverse the membrane as a helical segment. Residues 273-282 (GEDGRLDMVH) lie on the Cytoplasmic side of the membrane. The chain crosses the membrane as a helical span at residues 283–303 (IQNAALTGGVVVGTSSKMMLT). Position 304 (proline 304) is a topological domain, extracellular. A helical transmembrane segment spans residues 305–325 (FGALAAGFLAGTVSTLGYKFF). Over 326-346 (TPILESKFKVQDTCGVHNLHG) the chain is Cytoplasmic. Residues 347-367 (MPGVLGALLGVLVAGLATHEA) traverse the membrane as a helical segment. Residues 368-393 (YGDGLESVFPLIAEGQRSATSQAMHQ) are Extracellular-facing. Residues 394–414 (LFGLFVTLMFASVGGGLGGLL) form a helical membrane-spanning segment. At 415–458 (LKLPFLDSPPDSQCYEDQVHWQVPGEHEDKAQRPLRVEEADTYA) the chain is on the cytoplasmic side. An interaction with ANK3 region spans residues 416–424 (KLPFLDSPP). Positions 429-432 (YEDQ) match the Basolateral sorting signal motif. The segment at 439–458 (GEHEDKAQRPLRVEEADTYA) is disordered.

It belongs to the ammonium transporter (TC 2.A.49) family. Rh subfamily. As to quaternary structure, interacts (via C-terminus) with ANK2 and ANK3; required for targeting to the basolateral membrane. Post-translationally, N-glycosylated.

Its subcellular location is the cell membrane. It is found in the basolateral cell membrane. The catalysed reaction is NH4(+)(in) = NH4(+)(out). It carries out the reaction methylamine(out) = methylamine(in). It catalyses the reaction CO2(out) = CO2(in). In terms of biological role, ammonium transporter involved in the maintenance of acid-base homeostasis. Transports ammonium and its related derivative methylammonium across the basolateral plasma membrane of epithelial cells likely contributing to renal transepithelial ammonia transport and ammonia metabolism. May transport either NH4(+) or NH3 ammonia species predominantly mediating an electrogenic NH4(+) transport. May act as a CO2 channel providing for renal acid secretion. This chain is Ammonium transporter Rh type B (RHBG), found in Gorilla gorilla gorilla (Western lowland gorilla).